The sequence spans 454 residues: Histidine--tRNA ligase (454 aa).

Positions 434 to 454 (ADAGAWNPPTEDLHPGVIGTW) are disordered.

This sequence belongs to the class-II aminoacyl-tRNA synthetase family. In terms of assembly, homodimer.

Its subcellular location is the cytoplasm. The enzyme catalyses tRNA(His) + L-histidine + ATP = L-histidyl-tRNA(His) + AMP + diphosphate + H(+). This chain is Histidine--tRNA ligase (hisS), found in Cutibacterium acnes (strain DSM 16379 / KPA171202) (Propionibacterium acnes).